A 483-amino-acid chain; its full sequence is Cobyric acid synthase (483 aa).

Residues 251 to 438 form the GATase cobBQ-type domain; sequence ALIVAVPMLP…LHGIFSADRF (188 aa). Cys333 functions as the Nucleophile in the catalytic mechanism. Residue His430 is part of the active site.

Belongs to the CobB/CobQ family. CobQ subfamily.

It functions in the pathway cofactor biosynthesis; adenosylcobalamin biosynthesis. Catalyzes amidations at positions B, D, E, and G on adenosylcobyrinic A,C-diamide. NH(2) groups are provided by glutamine, and one molecule of ATP is hydrogenolyzed for each amidation. This chain is Cobyric acid synthase, found in Brucella abortus (strain S19).